Reading from the N-terminus, the 269-residue chain is Formamidopyrimidine-DNA glycosylase (269 aa).

Pro-2 acts as the Schiff-base intermediate with DNA in catalysis. Glu-3 (proton donor) is an active-site residue. Catalysis depends on Lys-57, which acts as the Proton donor; for beta-elimination activity. DNA-binding residues include His-90, Arg-109, and Lys-150. The segment at 235-269 (LVYGKAGEPCPECGEPLQELKIGQRNTFFCNECQQ) adopts an FPG-type zinc-finger fold. The active-site Proton donor; for delta-elimination activity is the Arg-259.

Belongs to the FPG family. In terms of assembly, monomer. It depends on Zn(2+) as a cofactor.

It catalyses the reaction Hydrolysis of DNA containing ring-opened 7-methylguanine residues, releasing 2,6-diamino-4-hydroxy-5-(N-methyl)formamidopyrimidine.. It carries out the reaction 2'-deoxyribonucleotide-(2'-deoxyribose 5'-phosphate)-2'-deoxyribonucleotide-DNA = a 3'-end 2'-deoxyribonucleotide-(2,3-dehydro-2,3-deoxyribose 5'-phosphate)-DNA + a 5'-end 5'-phospho-2'-deoxyribonucleoside-DNA + H(+). Functionally, involved in base excision repair of DNA damaged by oxidation or by mutagenic agents. Acts as a DNA glycosylase that recognizes and removes damaged bases. Has a preference for oxidized purines, such as 7,8-dihydro-8-oxoguanine (8-oxoG). Has AP (apurinic/apyrimidinic) lyase activity and introduces nicks in the DNA strand. Cleaves the DNA backbone by beta-delta elimination to generate a single-strand break at the site of the removed base with both 3'- and 5'-phosphates. This chain is Formamidopyrimidine-DNA glycosylase, found in Vibrio parahaemolyticus serotype O3:K6 (strain RIMD 2210633).